Here is a 912-residue protein sequence, read N- to C-terminus: Phosphoenolpyruvate carboxylase (912 aa).

Catalysis depends on residues histidine 138 and lysine 575.

Belongs to the PEPCase type 1 family. Mg(2+) serves as cofactor.

The enzyme catalyses oxaloacetate + phosphate = phosphoenolpyruvate + hydrogencarbonate. In terms of biological role, forms oxaloacetate, a four-carbon dicarboxylic acid source for the tricarboxylic acid cycle. The protein is Phosphoenolpyruvate carboxylase of Lactobacillus helveticus (strain DPC 4571).